The following is an 85-amino-acid chain: MAHKKAGGSTRNGRDSESKRLGVKRFGGESVLAGNIIVRQRGTKFHAGNNVGIGKDHTLFALTEGKVKFEVKGPKNRKFVSIEAE.

The interval 1-22 is disordered; it reads MAHKKAGGSTRNGRDSESKRLG.

Belongs to the bacterial ribosomal protein bL27 family.

This Vibrio parahaemolyticus serotype O3:K6 (strain RIMD 2210633) protein is Large ribosomal subunit protein bL27.